A 311-amino-acid chain; its full sequence is VQ motif-containing protein 9 (311 aa).

Over residues 1–27 (MDKSCNSSGDSSAVSASATSSTGNNTT) the composition is skewed to low complexity. The disordered stretch occupies residues 1–78 (MDKSCNSSGD…QINQGNLHQH (78 aa)). Residues 90-99 (FRDVVQKLTG) carry the VQ motif. Disordered stretches follow at residues 103-125 (HERISAPPQQPIHHPKPQQSSRL), 228-266 (QQENAPPSQHNSFPPPHPPPPSSAVSQTVPTSIPAPPLF), and 290-311 (GQLGFPVSPTTVPLPSPKYKGH). The segment covering 240 to 249 (FPPPHPPPPS) has biased composition (pro residues). Over residues 290-302 (GQLGFPVSPTTVP) the composition is skewed to low complexity.

Interacts (via N-terminus) with WRKY8. Highly expressed in roots and at lower levels in rosette leaves, cauline leaves, stems, flowers and siliques.

Its subcellular location is the nucleus. Functions as a negative regulator of salt stress response. Functions as a repressor of WRKY8 transcription factor by decreasing the DNA-binding activity of WRKY8 and acts antagonistically with WRKY8 to regulate sodium and potassium homeostasis under salt stress. The protein is VQ motif-containing protein 9 of Arabidopsis thaliana (Mouse-ear cress).